Reading from the N-terminus, the 121-residue chain is Ribonuclease P protein component (121 aa).

It belongs to the RnpA family. As to quaternary structure, consists of a catalytic RNA component (M1 or rnpB) and a protein subunit.

It catalyses the reaction Endonucleolytic cleavage of RNA, removing 5'-extranucleotides from tRNA precursor.. Its function is as follows. RNaseP catalyzes the removal of the 5'-leader sequence from pre-tRNA to produce the mature 5'-terminus. It can also cleave other RNA substrates such as 4.5S RNA. The protein component plays an auxiliary but essential role in vivo by binding to the 5'-leader sequence and broadening the substrate specificity of the ribozyme. In Erythrobacter litoralis (strain HTCC2594), this protein is Ribonuclease P protein component.